A 178-amino-acid chain; its full sequence is TITEETTGFFALGSGPARALSRVEDLFKELNYADQGPNTALVIEGDKAPPAAVIENIAKHCGINPKGLSILYATTWSLAGTVQIAARVLEVAMHKAHALHFALENIIDGTATTPIAPPFPDFVKAMGRTNDAIIYGGRAHLFVKGTDAEAKRLAEGLPSSTCASFGKPFAEIFADVNG.

This sequence belongs to the MCH family.

It localises to the cytoplasm. It carries out the reaction 5,10-methenyl-5,6,7,8-tetrahydromethanopterin + H2O = N(5)-formyl-5,6,7,8-tetrahydromethanopterin + H(+). It participates in one-carbon metabolism; formaldehyde degradation; formate from formaldehyde (H(4)MPT route): step 3/5. Its function is as follows. Catalyzes the hydrolysis of methenyl-H(4)MPT(+) to 5-formyl-H(4)MPT. In Hyphomicrobium methylovorum, this protein is Methenyltetrahydromethanopterin cyclohydrolase (mch).